We begin with the raw amino-acid sequence, 500 residues long: Polyenoic fatty acid isomerase (500 aa).

Residues 1 to 21 (MSLNRVLHIFLIAYLACTALT) form the signal peptide.

As to quaternary structure, homodimer. The cofactor is an oxidized flavin. Post-translationally, glycosylated.

It carries out the reaction (5Z,8Z,11Z,14Z,17Z)-eicosapentaenoate = (5Z,7E,9E,14Z,17Z)-icosapentaenoate. Functionally, involved in the biosynthesis of conjugated triene-containing fatty acids. Catalyzes the isomerization of a wide range of substrates containing three or more methylene interrupted olefins into a Z,E,E conjugated triene functionality. May be involved in a stress tolerance mechanism as response to intertidal habitats with direct sunlight, desiccation and high temperature. In vitro substrates include arachidonic acid ((5Z,8Z,11Z,14Z)-eicosatetraenoic acid), EPA ((5Z,8Z, 11Z,14Z,17Z)-eicosapentaenoic acid), DHA ((4Z,7Z,10Z,13Z,16Z,19Z)-docosahexenoic acid), adrenic acid ((7Z,10Z,13Z,16Z)-docosatetraenoic acid), anandamide (arachidonyl-N-ethanolamide) and eicosatrienoic acid ((5Z,8Z,11Z)-eicosatrienoic acid). Gamma-linolenic acid (18:3 6Z,9Z,12Z) and dihomo-gamma-linolenic acid (20:3 8Z,11Z,14Z) are transformed into mixtures of conjugated diene and triene fatty acids, linoleic acid is only transformed to a conjugated diene. This Ptilota filicina (Red alga) protein is Polyenoic fatty acid isomerase.